A 438-amino-acid chain; its full sequence is MTPITPIEAPLPKGVTDFLPEKADKIGYIEGKIRKVFELWGFRRIITPLLEFEDVIAAGLGDDLKAKTFRFDDRQSGKLIAVPSDITPQIARIVATRLRGYPLPHRICYSGRVLRHAELQSGRSREIFQSGVELIGLDSPEADAEMVTMAVEALKGLGFRDFKIDLGHVGFIRGIMTASGLEVAVRNRLQEAIGKKDVSAVRSILAESPLSDAAKDELAALPRLFGGREVLDEAGRVATNDTSRRALDNISQVLDLLDIHGVSDHLTIDLGEVRGLDYHTGLTFEGFVTGMGEAVCSGGRYDTLTARYGFPAPATGFTFNVLALLSALEKRPDVEASKTRDILIFNQQDDRREALEIAQQLRRRGYTTARDIIRRNFDDSLDYARRMNILHMMVVGGDQCGPDEVYLVRVADGQGQRIKKAEVFSERFSLDAGPDKES.

This sequence belongs to the class-II aminoacyl-tRNA synthetase family. HisZ subfamily. Heteromultimer composed of HisG and HisZ subunits.

Its subcellular location is the cytoplasm. It functions in the pathway amino-acid biosynthesis; L-histidine biosynthesis; L-histidine from 5-phospho-alpha-D-ribose 1-diphosphate: step 1/9. Required for the first step of histidine biosynthesis. May allow the feedback regulation of ATP phosphoribosyltransferase activity by histidine. The chain is ATP phosphoribosyltransferase regulatory subunit from Geobacter sulfurreducens (strain ATCC 51573 / DSM 12127 / PCA).